The chain runs to 63 residues: Large ribosomal subunit protein bL32 (63 aa).

Positions 1-20 are disordered; it reads MANPKAKMSKSRRDKRRAQF. The span at 7–18 shows a compositional bias: basic residues; that stretch reads KMSKSRRDKRRA.

The protein belongs to the bacterial ribosomal protein bL32 family.

This is Large ribosomal subunit protein bL32 from Chlorobaculum tepidum (strain ATCC 49652 / DSM 12025 / NBRC 103806 / TLS) (Chlorobium tepidum).